A 576-amino-acid chain; its full sequence is Arginine--tRNA ligase (576 aa).

Positions 123-133 (PNIGKEMHVGH) match the 'HIGH' region motif.

The protein belongs to the class-I aminoacyl-tRNA synthetase family. Monomer.

Its subcellular location is the cytoplasm. It carries out the reaction tRNA(Arg) + L-arginine + ATP = L-arginyl-tRNA(Arg) + AMP + diphosphate. This chain is Arginine--tRNA ligase, found in Wigglesworthia glossinidia brevipalpis.